The sequence spans 68 residues: MTPDQRLTELEIRVAEQEKTIDELSSVLAEQWKTIDRLSKKLGALTDRFLELEEQTAPDVPVTKPPHW.

This sequence belongs to the SlyX family.

The sequence is that of Protein SlyX homolog from Brucella anthropi (strain ATCC 49188 / DSM 6882 / CCUG 24695 / JCM 21032 / LMG 3331 / NBRC 15819 / NCTC 12168 / Alc 37) (Ochrobactrum anthropi).